A 106-amino-acid polypeptide reads, in one-letter code: UPF0145 protein PputGB1_2909 (106 aa).

It belongs to the UPF0145 family.

This Pseudomonas putida (strain GB-1) protein is UPF0145 protein PputGB1_2909.